The following is a 125-amino-acid chain: Temptin (125 aa).

Positions M1–A22 are cleaved as a signal peptide. Intrachain disulfides connect C40/C125 and C79/C99. The interval L78–C125 is disordered. Residues Q103–L113 show a composition bias toward polar residues.

Binds to attractin and enticin. As to expression, produced by the albumen gland of the egg cordons.

Its subcellular location is the secreted. In terms of biological role, a component of the complex of water-borne protein pheromones that stimulates attraction and mating behavior. Modulates pheromone signaling by direct binding to attractin. The protein is Temptin of Aplysia californica (California sea hare).